The following is a 337-amino-acid chain: Heme A synthase (337 aa).

The next 5 helical transmembrane spans lie at 6-26 (ITKW…IGGI), 87-107 (FIHR…LIYF), 119-139 (LPYI…WYMV), 154-174 (LAFH…QLIK), and 192-212 (LIFS…GALV). His-256 contributes to the heme binding site. A run of 3 helical transmembrane segments spans residues 258–278 (LVGY…LKIE), 285–305 (IAYF…ITLL), and 308–328 (VPII…SIII). A heme-binding site is contributed by His-316.

The protein belongs to the COX15/CtaA family. Type 2 subfamily. In terms of assembly, interacts with CtaB. The cofactor is heme b.

It localises to the cell membrane. It carries out the reaction Fe(II)-heme o + 2 A + H2O = Fe(II)-heme a + 2 AH2. Its pathway is porphyrin-containing compound metabolism; heme A biosynthesis; heme A from heme O: step 1/1. Catalyzes the conversion of heme O to heme A by two successive hydroxylations of the methyl group at C8. The first hydroxylation forms heme I, the second hydroxylation results in an unstable dihydroxymethyl group, which spontaneously dehydrates, resulting in the formyl group of heme A. In Rickettsia africae (strain ESF-5), this protein is Heme A synthase.